A 237-amino-acid chain; its full sequence is 3-oxoacyl-[acyl-carrier-protein] reductase (237 aa).

At Met1 the chain carries N-acetylmethionine. NADP(+) is bound by residues Ser11–Ile14 and Arg34–Asn35. Lys40 is subject to N6-acetyllysine. NADP(+)-binding positions include Asp56 and Ala83–Gly85. The residue at position 96 (Lys96) is an N6-acetyllysine. Ser135 contributes to the substrate binding site. Residues Tyr148, Lys152, and Val181–Thr183 each bind NADP(+). Tyr148 serves as the catalytic Proton acceptor. Lys195 bears the N6-acetyllysine mark.

The protein belongs to the short-chain dehydrogenases/reductases (SDR) family. In terms of assembly, homotetramer (in vitro). Heterotetramer with HSD17B8; contains two molecules each of HSD17B8 and CBR4. Does not form homotetramers when HSD17B8 is coexpressed, only heterotetramers (in vitro). As to expression, detected in liver and kidney (at protein level). Displays the highest expression in neuronal and muscle tissues.

The protein localises to the mitochondrion matrix. It carries out the reaction a (3R)-hydroxyacyl-[ACP] + NADP(+) = a 3-oxoacyl-[ACP] + NADPH + H(+). The enzyme catalyses a quinone + NADPH + H(+) = a quinol + NADP(+). Its pathway is lipid metabolism; fatty acid biosynthesis. Functionally, component of the heterotetramer complex KAR (3-ketoacyl-[acyl carrier protein] reductase or 3-ketoacyl-[ACP] reductase) that forms part of the mitochondrial fatty acid synthase (mtFAS). Beta-subunit of the KAR heterotetramer complex, responsible for the 3-ketoacyl-ACP reductase activity of the mtFAS, reduces 3-oxoacyl-[ACP] to (3R)-hydroxyacyl-[ACP] in a NADPH-dependent manner with no chain length preference, thereby participating in mitochondrial fatty acid biosynthesis. The homotetramer has NADPH-dependent quinone reductase activity (in vitro), hence could play a role in protection against cytotoxicity of exogenous quinones. As a heterotetramer, it can also reduce 9,10-phenanthrenequinone, 1,4-benzoquinone and various other o-quinones and p-quinones (in vitro). This chain is 3-oxoacyl-[acyl-carrier-protein] reductase (CBR4), found in Homo sapiens (Human).